The following is a 363-amino-acid chain: MAP kinase kinase mkk-4 (363 aa).

The segment at 1-38 (MVQEDDENLRNSMSLRPTSLSTRPTSLSVNGNEKTLPE) is disordered. Residues 14 to 28 (SLRPTSLSTRPTSLS) show a composition bias toward low complexity. Residues 66 to 330 (LQDLGAIGNG…YDTLKSFDFY (265 aa)) enclose the Protein kinase domain. Residues 72-80 (IGNGNFGTV) and Lys95 each bind ATP. Asp194 serves as the catalytic Proton acceptor.

The protein belongs to the protein kinase superfamily. STE Ser/Thr protein kinase family. MAP kinase kinase subfamily. In terms of tissue distribution, expressed in the pharynx, including the corpus, isthmus and terminal bulb.

It localises to the cytoplasm. It catalyses the reaction L-seryl-[protein] + ATP = O-phospho-L-seryl-[protein] + ADP + H(+). The enzyme catalyses L-threonyl-[protein] + ATP = O-phospho-L-threonyl-[protein] + ADP + H(+). It carries out the reaction L-tyrosyl-[protein] + ATP = O-phospho-L-tyrosyl-[protein] + ADP + H(+). In terms of biological role, activity is required in presynaptic neurons, in a dose-dependent manner, for normal presynaptic development and morphology. Plays a role in the formation of muscle connections, also called muscle arm extensions, between the body wall and the motor axons in the dorsal and ventral cord. This chain is MAP kinase kinase mkk-4 (mkk-4), found in Caenorhabditis elegans.